A 284-amino-acid polypeptide reads, in one-letter code: 4-hydroxy-3-methylbut-2-enyl diphosphate reductase (284 aa).

Position 12 (Cys-12) interacts with [4Fe-4S] cluster. 2 residues coordinate (2E)-4-hydroxy-3-methylbut-2-enyl diphosphate: His-40 and His-72. Dimethylallyl diphosphate-binding residues include His-40 and His-72. Isopentenyl diphosphate is bound by residues His-40 and His-72. Cys-94 contributes to the [4Fe-4S] cluster binding site. His-122 serves as a coordination point for (2E)-4-hydroxy-3-methylbut-2-enyl diphosphate. A dimethylallyl diphosphate-binding site is contributed by His-122. His-122 lines the isopentenyl diphosphate pocket. Glu-124 (proton donor) is an active-site residue. Residue Thr-161 participates in (2E)-4-hydroxy-3-methylbut-2-enyl diphosphate binding. Position 193 (Cys-193) interacts with [4Fe-4S] cluster. Residues Ser-221, Asn-223, and Ser-264 each coordinate (2E)-4-hydroxy-3-methylbut-2-enyl diphosphate. Positions 221, 223, and 264 each coordinate dimethylallyl diphosphate. Residues Ser-221, Asn-223, and Ser-264 each contribute to the isopentenyl diphosphate site.

Belongs to the IspH family. It depends on [4Fe-4S] cluster as a cofactor.

It catalyses the reaction isopentenyl diphosphate + 2 oxidized [2Fe-2S]-[ferredoxin] + H2O = (2E)-4-hydroxy-3-methylbut-2-enyl diphosphate + 2 reduced [2Fe-2S]-[ferredoxin] + 2 H(+). The catalysed reaction is dimethylallyl diphosphate + 2 oxidized [2Fe-2S]-[ferredoxin] + H2O = (2E)-4-hydroxy-3-methylbut-2-enyl diphosphate + 2 reduced [2Fe-2S]-[ferredoxin] + 2 H(+). Its pathway is isoprenoid biosynthesis; dimethylallyl diphosphate biosynthesis; dimethylallyl diphosphate from (2E)-4-hydroxy-3-methylbutenyl diphosphate: step 1/1. The protein operates within isoprenoid biosynthesis; isopentenyl diphosphate biosynthesis via DXP pathway; isopentenyl diphosphate from 1-deoxy-D-xylulose 5-phosphate: step 6/6. In terms of biological role, catalyzes the conversion of 1-hydroxy-2-methyl-2-(E)-butenyl 4-diphosphate (HMBPP) into a mixture of isopentenyl diphosphate (IPP) and dimethylallyl diphosphate (DMAPP). Acts in the terminal step of the DOXP/MEP pathway for isoprenoid precursor biosynthesis. The sequence is that of 4-hydroxy-3-methylbut-2-enyl diphosphate reductase from Dehalococcoides mccartyi (strain ATCC BAA-2266 / KCTC 15142 / 195) (Dehalococcoides ethenogenes (strain 195)).